We begin with the raw amino-acid sequence, 383 residues long: Centractin (383 aa).

The disordered stretch occupies residues 227-246 (PQKEEELLEPDSSSSKPVQP).

The protein belongs to the actin family. ARP1 subfamily.

Its subcellular location is the cytoplasm. The protein resides in the cytoskeleton. It localises to the microtubule organizing center. The protein localises to the centrosome. Component of a multi-subunit complex, PPK2 (poly P kinase complex 2) involved in microtubule based vesicle motility. It is associated with the centrosome. PPK2 complex can synthesize a poly chain of hundreds of phosphate residues linked by ATP-like bonds. The sequence is that of Centractin (arpA) from Dictyostelium discoideum (Social amoeba).